A 63-amino-acid chain; its full sequence is Sperm protamine P1 (63 aa).

Positions 1 to 63 (MARYRRHSRS…RYSRRGRRRY (63 aa)) are disordered.

This sequence belongs to the protamine P1 family. In terms of tissue distribution, testis.

It localises to the nucleus. It is found in the chromosome. Its function is as follows. Protamines substitute for histones in the chromatin of sperm during the haploid phase of spermatogenesis. They compact sperm DNA into a highly condensed, stable and inactive complex. The sequence is that of Sperm protamine P1 (PRM1) from Pseudantechinus macdonnellensis (Fat-tailed marsupial mouse).